The primary structure comprises 1238 residues: uncharacterized protein (1238 aa).

7 disordered regions span residues 22–83, 96–150, 169–250, 264–694, 739–915, 936–955, and 1057–1089; these read LQSA…QEHL, SSRQ…IASP, FEPD…HQML, QLNS…AAMV, TKAA…SVPE, THSA…APHE, and PKIS…QCSS. The span at 35 to 49 shows a compositional bias: low complexity; it reads QPPNQQPHQTQQQQQ. Residues 58-72 show a composition bias toward polar residues; it reads PSIQNLTTNATPTST. Positions 73–83 are enriched in low complexity; it reads QLQQQQQQEHL. The span at 96–110 shows a compositional bias: polar residues; the sequence is SSRQNQGAPSGNLSN. The segment covering 125-145 has biased composition (low complexity); it reads SVSGNTNHTGSNSSSNSGSNN. A compositionally biased stretch (polar residues) spans 188-204; sequence SASSASKLPTHNVQQQH. Composition is skewed to low complexity over residues 272-287, 309-334, and 393-406; these read SYQH…QSHP, PLLT…SSQH, and SNEE…NSSN. Over residues 433-450 the composition is skewed to polar residues; the sequence is SKPQHPQQAANLNNSCSP. Ser453 carries the phosphoserine modification. Residues 463-472 show a composition bias toward polar residues; sequence PFSTQKQSQT. Basic and acidic residues predominate over residues 523–536; sequence TEQHRMQQDDEPPK. Low complexity-rich tracts occupy residues 549 to 570 and 632 to 641; these read QSNS…SQSS and TTAAVAAPPA. Thr642 carries the phosphothreonine modification. Positions 678–688 are enriched in basic and acidic residues; it reads ERISSPEKPAE. Phosphoserine is present on residues Ser682, Ser749, and Ser753. The span at 755-764 shows a compositional bias: polar residues; it reads IPQSRSTSTP. Residues Ser793 and Ser799 each carry the phosphoserine modification. Positions 832–860 are enriched in low complexity; it reads STSAAAAAALAARQLSEAASATKSKPAAG. The segment covering 861–874 has biased composition (basic residues); that stretch reads AKKKNAGVKGKKGS. A compositionally biased stretch (basic and acidic residues) spans 937–947; the sequence is HSAEDVNEKQT. Residues 1071-1089 show a composition bias toward polar residues; sequence DSSISYSDDPNESRSQCSS. Residues 1089–1131 form a C2HC pre-PHD-type; degenerate zinc finger; that stretch reads SVDLLDCSTESKFVETFRGMGKTSENGFEVWLHEDCAVWSNDI. Ser1099 is modified (phosphoserine). A PHD-type zinc finger spans residues 1151-1199; it reads YQCVLCQQTGASICCFQRCCKAAAHVPCGRSANWSLSEEDRKVYCHLHR.

This is an uncharacterized protein from Drosophila melanogaster (Fruit fly).